A 506-amino-acid chain; its full sequence is GTPase Der (506 aa).

EngA-type G domains lie at 3 to 166 and 218 to 391; these read PVVA…GEQL and IKIA…ACAT. GTP contacts are provided by residues 9–16, 56–60, 118–121, 224–231, 271–275, and 336–339; these read GRPNVGKS, DTGGI, NKTD, DTAGV, and NKWD. In terms of domain architecture, KH-like spans 392–476; sequence QKNSTSMLTR…PIRIQFQEGN (85 aa).

Belongs to the TRAFAC class TrmE-Era-EngA-EngB-Septin-like GTPase superfamily. EngA (Der) GTPase family. As to quaternary structure, associates with the 50S ribosomal subunit.

Its function is as follows. GTPase that plays an essential role in the late steps of ribosome biogenesis. The polypeptide is GTPase Der (Actinobacillus pleuropneumoniae serotype 7 (strain AP76)).